The chain runs to 2564 residues: Highly reducing polyketide synthase 40 (2564 aa).

In terms of domain architecture, Ketosynthase family 3 (KS3) spans 8-432; that stretch reads PEPIAIIGMS…GTNAHVIVDR (425 aa). Residues cysteine 181, histidine 317, and histidine 358 each act as for beta-ketoacyl synthase activity in the active site. The disordered stretch occupies residues 435-482; sequence EHNHSNGTNGTNGTHHHNGTNGSNGNGTNGTNGTNGTDGFHDTESISD. Residues 439–455 show a composition bias toward low complexity; sequence SNGTNGTNGTHHHNGTN. Over residues 473 to 482 the composition is skewed to basic and acidic residues; sequence GFHDTESISD. A malonyl-CoA:ACP transacylase (MAT) domain region spans residues 580–914; the sequence is YVFGGQGAQY…SAAENMLRTL (335 aa). Residues 973–1113 are N-terminal hotdog fold; the sequence is HELLGNLSAD…GRIRAVVDQG (141 aa). Positions 973–1280 are dehydratase (DH) domain; that stretch reads HELLGNLSAD…GLRTAQLPSD (308 aa). A PKS/mFAS DH domain is found at 973-1283; the sequence is HELLGNLSAD…TAQLPSDVVN (311 aa). Histidine 1005 functions as the Proton acceptor; for dehydratase activity in the catalytic mechanism. Positions 1130 to 1283 are C-terminal hotdog fold; the sequence is AASVPHHITS…TAQLPSDVVN (154 aa). Catalysis depends on aspartate 1199, which acts as the Proton donor; for dehydratase activity. The interval 1451–1556 is methyltransferase (CMet) domain; sequence LEVGGGTASA…RQLLRPGGTL (106 aa). The tract at residues 1854–2167 is enoyl reductase (ER) domain; the sequence is GLLETFRWVD…AGKHMGKVIL (314 aa). Residues 2191–2370 form a ketoreductase (KR) domain region; it reads ATYLLVGGFG…SFAIDVGVVS (180 aa). The region spanning 2472–2549 is the Carrier domain; it reads EALDAVGQAV…ELIHLVAGKS (78 aa). Serine 2509 is modified (O-(pantetheine 4'-phosphoryl)serine).

Its pathway is secondary metabolite biosynthesis. Highly reducing polyketide synthase; part of the gene cluster that mediates the biosynthesis of the lipopeptides W493 A and B. W493 A and B consist of six amino acid residues D-allo-thr, L-Ala, D-Ala, L-Gln, D-Tyr, and L-Val/L-Ile linked to a 3-hydroxy-4-methyltetradecanoic acid polyketide chain. The biosynthesis starts with formation of the linear polyketide chain by the highly reducing polyketide synthase PKS40. The gene cluster contains a putative acyl-CoA ligase (FPSE_09184) for formation of a CoA thioester polyketide. The thiol bond could be hydrolyzed by the putative thioesterase (FPSE_09186) and then accepted by the first T domain in module 1 of NRPS32. The second T domain is responsible for accepting a threonine, which is adenylated by the A domain and epimerized to the D-allo-threonine formed by the E domain. The five successive modules incorporate Ala, Ala, Gln, Tyr, and Val/Ile into the final product, which is released by cyclization. This is Highly reducing polyketide synthase 40 from Fusarium pseudograminearum (strain CS3096) (Wheat and barley crown-rot fungus).